A 205-amino-acid chain; its full sequence is Holliday junction branch migration complex subunit RuvA (205 aa).

The domain I stretch occupies residues 1–62 (MFEYVTGYVE…EDIMALYGFK (62 aa)). The tract at residues 63–141 (TREERLLFTK…DVVPDAFVDL (79 aa)) is domain II. Residues 142–152 (FSDTESFDTKK) form a flexible linker region. The tract at residues 153-205 (GSSVELDEALEALRALGYAEREVSRVVPELLKESLTTDQYIKKALSLLLNGKR) is domain III.

This sequence belongs to the RuvA family. Homotetramer. Forms an RuvA(8)-RuvB(12)-Holliday junction (HJ) complex. HJ DNA is sandwiched between 2 RuvA tetramers; dsDNA enters through RuvA and exits via RuvB. An RuvB hexamer assembles on each DNA strand where it exits the tetramer. Each RuvB hexamer is contacted by two RuvA subunits (via domain III) on 2 adjacent RuvB subunits; this complex drives branch migration. In the full resolvosome a probable DNA-RuvA(4)-RuvB(12)-RuvC(2) complex forms which resolves the HJ.

The protein localises to the cytoplasm. In terms of biological role, the RuvA-RuvB-RuvC complex processes Holliday junction (HJ) DNA during genetic recombination and DNA repair, while the RuvA-RuvB complex plays an important role in the rescue of blocked DNA replication forks via replication fork reversal (RFR). RuvA specifically binds to HJ cruciform DNA, conferring on it an open structure. The RuvB hexamer acts as an ATP-dependent pump, pulling dsDNA into and through the RuvAB complex. HJ branch migration allows RuvC to scan DNA until it finds its consensus sequence, where it cleaves and resolves the cruciform DNA. The polypeptide is Holliday junction branch migration complex subunit RuvA (Bacillus mycoides (strain KBAB4) (Bacillus weihenstephanensis)).